A 172-amino-acid chain; its full sequence is RNA silencing suppressor p19 (172 aa).

Residues 1–15 are compositionally biased toward basic and acidic residues; the sequence is MERAIQGNDAREQAY. Residues 1–37 are disordered; the sequence is MERAIQGNDAREQAYGERWNGGSGSSTSPFKLPDESP.

Belongs to the tombusvirus protein p19 family. As to quaternary structure, homodimer.

Functionally, viral suppressor of RNA silencing which binds specifically to silencing RNAs (siRNAs). Acts as a molecular caliper to specifically select siRNAs based on the length of the duplex region of the RNA. The sequence is that of RNA silencing suppressor p19 from Capsicum annuum (Capsicum pepper).